The following is an 896-amino-acid chain: Alanine--tRNA ligase (896 aa).

Positions 581, 585, 684, and 688 each coordinate Zn(2+).

Belongs to the class-II aminoacyl-tRNA synthetase family. It depends on Zn(2+) as a cofactor.

It is found in the cytoplasm. The catalysed reaction is tRNA(Ala) + L-alanine + ATP = L-alanyl-tRNA(Ala) + AMP + diphosphate. Functionally, catalyzes the attachment of alanine to tRNA(Ala) in a two-step reaction: alanine is first activated by ATP to form Ala-AMP and then transferred to the acceptor end of tRNA(Ala). Also edits incorrectly charged Ser-tRNA(Ala) and Gly-tRNA(Ala) via its editing domain. The protein is Alanine--tRNA ligase of Renibacterium salmoninarum (strain ATCC 33209 / DSM 20767 / JCM 11484 / NBRC 15589 / NCIMB 2235).